A 233-amino-acid chain; its full sequence is Small ribosomal subunit protein uS2 (233 aa).

It belongs to the universal ribosomal protein uS2 family.

This chain is Small ribosomal subunit protein uS2, found in Clostridium beijerinckii (strain ATCC 51743 / NCIMB 8052) (Clostridium acetobutylicum).